We begin with the raw amino-acid sequence, 788 residues long: Protein FAR1-RELATED SEQUENCE 12 (788 aa).

Residues Glu57–Gly133 enclose the FAR1 1 domain. Residues His127–Thr200 form a disordered region. Positions Pro142–Thr151 are enriched in low complexity. Basic and acidic residues predominate over residues Lys165 to Arg175. One can recognise an FAR1 2 domain in the interval Gln225–Pro301. One can recognise an MULE domain in the interval Ser399 to Arg495. Residues His674–Asp710 form an SWIM-type zinc finger.

Belongs to the FHY3/FAR1 family. In terms of tissue distribution, expressed in hypocotyls, rosette and cauline leaves, inflorescences stems, flowers and siliques.

Its subcellular location is the nucleus. Putative transcription activator involved in regulating light control of development. The sequence is that of Protein FAR1-RELATED SEQUENCE 12 (FRS12) from Arabidopsis thaliana (Mouse-ear cress).